We begin with the raw amino-acid sequence, 401 residues long: Elongation factor Tu 2 (401 aa).

The 200-residue stretch at 10–209 folds into the tr-type G domain; it reads KPHVNVGTIG…AVDEYIPTPV (200 aa). Residues 19-26 form a G1 region; the sequence is GHVDHGKT. 19 to 26 lines the GTP pocket; that stretch reads GHVDHGKT. Position 26 (threonine 26) interacts with Mg(2+). Residues 60-64 form a G2 region; sequence GITIA. Residues 81–84 form a G3 region; it reads DCPG. GTP contacts are provided by residues 81–85 and 136–139; these read DCPGH and NKVD. The segment at 136-139 is G4; the sequence is NKVD. Residues 174–176 form a G5 region; sequence SAL.

It belongs to the TRAFAC class translation factor GTPase superfamily. Classic translation factor GTPase family. EF-Tu/EF-1A subfamily. As to quaternary structure, monomer.

The protein localises to the cytoplasm. The catalysed reaction is GTP + H2O = GDP + phosphate + H(+). GTP hydrolase that promotes the GTP-dependent binding of aminoacyl-tRNA to the A-site of ribosomes during protein biosynthesis. This Roseiflexus castenholzii (strain DSM 13941 / HLO8) protein is Elongation factor Tu 2.